We begin with the raw amino-acid sequence, 202 residues long: FMN-dependent NADH:quinone oxidoreductase 2 (202 aa).

Residues Ser-9, 15 to 17, and 95 to 98 each bind FMN; these read SAS and MWNL.

The protein belongs to the azoreductase type 1 family. Homodimer. FMN is required as a cofactor.

The enzyme catalyses 2 a quinone + NADH + H(+) = 2 a 1,4-benzosemiquinone + NAD(+). It catalyses the reaction N,N-dimethyl-1,4-phenylenediamine + anthranilate + 2 NAD(+) = 2-(4-dimethylaminophenyl)diazenylbenzoate + 2 NADH + 2 H(+). In terms of biological role, quinone reductase that provides resistance to thiol-specific stress caused by electrophilic quinones. Its function is as follows. Also exhibits azoreductase activity. Catalyzes the reductive cleavage of the azo bond in aromatic azo compounds to the corresponding amines. This is FMN-dependent NADH:quinone oxidoreductase 2 from Hahella chejuensis (strain KCTC 2396).